The sequence spans 311 residues: Phospholipid phosphatase 3 (311 aa).

Topologically, residues 1 to 33 (MQNYKYDKAIVPESKNGGSPALNNNPRRSGSKR) are cytoplasmic. Ser-19 is subject to Phosphoserine. Residues 34 to 54 (VLLICLDLFCLFMAGLPFLII) traverse the membrane as a helical segment. Over 55 to 85 (ETSTIKPYHRGFYCNDESIKYPLKTGETIND) the chain is Extracellular. Residues 86–106 (AVLCAVGIVIAILAIITGEFY) form a helical membrane-spanning segment. At 107 to 122 (RIYYLKKSRSTIQNPY) the chain is on the cytoplasmic side. Positions 109-110 (YY) match the Dityrosine basolateral targeting motif motif. Residues 123–143 (VAALYKQVGCFLFGCAISQSF) form a helical membrane-spanning segment. The Extracellular segment spans residues 144-193 (TDIAKVSIGRLRPHFLSVCNPDFSQINCSEGYIQNYRCRGDDSKVQEARK). The tract at residues 148–156 (KVSIGRLRP) is phosphatase sequence motif I. Residue Asn-170 is glycosylated (N-linked (GlcNAc...) asparagine). An Integrin-binding motif motif is present at residues 182-184 (RGD). The chain crosses the membrane as a helical span at residues 194–214 (SFFSGHASFSMYTMLYLVLYL). The interval 196–199 (FSGH) is phosphatase sequence motif II. The Proton donors role is filled by His-199. The Cytoplasmic segment spans residues 215 to 225 (QARFTWRGARL). A helical transmembrane segment spans residues 226–243 (LRPLLQFTLIMMAFYTGL). Positions 244–255 (SRVSDHKHHPSD) are phosphatase sequence motif III. At 244-257 (SRVSDHKHHPSDVL) the chain is on the extracellular side. The Nucleophile role is filled by His-251. A helical transmembrane segment spans residues 258-278 (AGFAQGALVACCIVFFVSDLF). The segment at 275-311 (SDLFKTKTTLSLPAPAIRKEILSPVDIIDRNNHHNMM) is mediates interaction with CTNND1. At 279–311 (KTKTTLSLPAPAIRKEILSPVDIIDRNNHHNMM) the chain is on the cytoplasmic side.

The protein belongs to the PA-phosphatase related phosphoesterase family. Forms functional homodimers and homooligomers that are not required for substrate recognition and catalytic activity. Can also form heterooligomers with other PLPP2 and PLPP3. Interacts with CTNND1; negatively regulates the PLPP3-mediated stabilization of beta-catenin/CTNNB1. Post-translationally, N-glycosylated. Contains high-mannose oligosaccharides. As to expression, ubiquitously expressed. Highly expressed in heart and placenta.

The protein resides in the cell membrane. It localises to the basolateral cell membrane. Its subcellular location is the endoplasmic reticulum membrane. The protein localises to the endoplasmic reticulum-Golgi intermediate compartment membrane. It is found in the golgi apparatus membrane. The protein resides in the golgi apparatus. It localises to the trans-Golgi network membrane. Its subcellular location is the membrane raft. It carries out the reaction a 1,2-diacyl-sn-glycero-3-phosphate + H2O = a 1,2-diacyl-sn-glycerol + phosphate. It catalyses the reaction 1,2-dihexadecanoyl-sn-glycero-3-phosphate + H2O = 1,2-dihexadecanoyl-sn-glycerol + phosphate. The catalysed reaction is 1,2-di-(9Z-octadecenoyl)-sn-glycero-3-phosphate + H2O = 1,2-di-(9Z-octadecenoyl)-sn-glycerol + phosphate. The enzyme catalyses a monoacyl-sn-glycero-3-phosphate + H2O = a monoacylglycerol + phosphate. It carries out the reaction (9Z)-octadecenoyl-sn-glycero-3-phosphate + H2O = (9Z-octadecenoyl)-glycerol + phosphate. It catalyses the reaction sphing-4-enine 1-phosphate + H2O = sphing-4-enine + phosphate. The catalysed reaction is an N-acylsphing-4-enine 1-phosphate + H2O = an N-acylsphing-4-enine + phosphate. The enzyme catalyses N-(octanoyl)-sphing-4-enine-1-phosphate + H2O = N-octanoylsphing-4-enine + phosphate. It carries out the reaction N-(9Z-octadecenoyl)-ethanolamine phosphate + H2O = N-(9Z-octadecenoyl) ethanolamine + phosphate. It participates in lipid metabolism; phospholipid metabolism. Its activity is regulated as follows. Magnesium-independent phospholipid phosphatase. Insensitive to N-ethylmaleimide. Inhibited by sphingosine, zinc ions and modestly by propanolol. Its function is as follows. Magnesium-independent phospholipid phosphatase of the plasma membrane that catalyzes the dephosphorylation of a variety of glycerolipid and sphingolipid phosphate esters including phosphatidate/PA, lysophosphatidate/LPA, diacylglycerol pyrophosphate/DGPP, sphingosine 1-phosphate/S1P and ceramide 1-phosphate/C1P. Also acts on N-oleoyl ethanolamine phosphate/N-(9Z-octadecenoyl)-ethanolamine phosphate, a potential physiological compound. Has both an extracellular and an intracellular phosphatase activity, allowing the hydrolysis and the cellular uptake of these bioactive lipid mediators from the milieu, regulating signal transduction in different cellular processes. Through the dephosphorylation of extracellular sphingosine-1-phosphate and the regulation of its extra- and intracellular availability, plays a role in vascular homeostasis, regulating endothelial cell migration, adhesion, survival, proliferation and the production of pro-inflammatory cytokines. By maintaining the appropriate levels of this lipid in the cerebellum, also ensure its proper development and function. Through its intracellular lipid phosphatase activity may act in early compartments of the secretory pathway, regulating the formation of Golgi to endoplasmic reticulum retrograde transport carriers. Independently of this phosphatase activity may also function in the Wnt signaling pathway and the stabilization of beta-catenin/CTNNB1, thereby regulating cell proliferation, migration and differentiation in angiogenesis or yet in tumor growth. Also plays a role in integrin-mediated cell-cell adhesion in angiogenesis. This is Phospholipid phosphatase 3 from Homo sapiens (Human).